A 33-amino-acid chain; its full sequence is Brevinin-2DYd (33 aa).

A disulfide bridge links Cys-27 with Cys-33.

As to expression, expressed by the skin glands.

The protein localises to the secreted. Its function is as follows. Antimicrobial peptide. A mixture of Brevinin-2DYc/2DYd is active against the Gram-positive bacterium S.aureus (MIC=15 uM) and the Gram-negative bacterium E.coli (MIC=15 uM). This chain is Brevinin-2DYd, found in Rana dybowskii (Dybovsky's frog).